We begin with the raw amino-acid sequence, 219 residues long: ATP synthase delta chain, chloroplastic (219 aa).

The transit peptide at M1–A33 directs the protein to the chloroplast.

The protein belongs to the ATPase delta chain family. As to quaternary structure, F-type ATPases have 2 components, F(1) - the catalytic core - and F(0) - the membrane proton channel. F(1) has five subunits: alpha(3), beta(3), gamma(1), delta(1), epsilon(1). F(0) has four main subunits: a(1), b(1), b'(1) and c(10-14). The alpha and beta chains form an alternating ring which encloses part of the gamma chain. F(1) is attached to F(0) by a central stalk formed by the gamma and epsilon chains, while a peripheral stalk is formed by the delta, b and b' chains.

It localises to the plastid. It is found in the chloroplast thylakoid membrane. F(1)F(0) ATP synthase produces ATP from ADP in the presence of a proton or sodium gradient. F-type ATPases consist of two structural domains, F(1) containing the extramembraneous catalytic core and F(0) containing the membrane proton channel, linked together by a central stalk and a peripheral stalk. During catalysis, ATP synthesis in the catalytic domain of F(1) is coupled via a rotary mechanism of the central stalk subunits to proton translocation. In terms of biological role, this protein seems to be part of the stalk that links CF(0) to CF(1). It either transmits conformational changes from CF(0) into CF(1) or is implicated in proton conduction. The protein is ATP synthase delta chain, chloroplastic of Chlamydomonas reinhardtii (Chlamydomonas smithii).